We begin with the raw amino-acid sequence, 130 residues long: Small ribosomal subunit protein uS11 (130 aa).

This sequence belongs to the universal ribosomal protein uS11 family. In terms of assembly, part of the 30S ribosomal subunit. Interacts with proteins S7 and S18. Binds to IF-3.

Located on the platform of the 30S subunit, it bridges several disparate RNA helices of the 16S rRNA. Forms part of the Shine-Dalgarno cleft in the 70S ribosome. This chain is Small ribosomal subunit protein uS11, found in Campylobacter curvus (strain 525.92).